A 308-amino-acid polypeptide reads, in one-letter code: uncharacterized protein (308 aa).

One can recognise an ABC transporter domain in the interval 6 to 234 (LHIEGLDKKI…TEKAIIEVQP (229 aa)). An ATP-binding site is contributed by 38-45 (GPNGSGKT).

The protein belongs to the ABC transporter superfamily.

This is an uncharacterized protein from Bacillus subtilis (strain 168).